The following is a 334-amino-acid chain: Fructose-1,6-bisphosphatase class 1 (334 aa).

Glu90, Asp113, Leu115, and Asp116 together coordinate Mg(2+). Substrate-binding positions include Asp116–Ser119, Asn209, Tyr242, and Lys272. Glu278 contacts Mg(2+).

This sequence belongs to the FBPase class 1 family. In terms of assembly, homotetramer. The cofactor is Mg(2+).

The protein localises to the cytoplasm. The enzyme catalyses beta-D-fructose 1,6-bisphosphate + H2O = beta-D-fructose 6-phosphate + phosphate. Its pathway is carbohydrate biosynthesis; gluconeogenesis. The polypeptide is Fructose-1,6-bisphosphatase class 1 (Haemophilus ducreyi (strain 35000HP / ATCC 700724)).